The sequence spans 498 residues: WD repeat-containing protein 55 homolog (498 aa).

The segment at 1–133 is disordered; the sequence is MHTHNNFKTP…TFDLDEDDET (133 aa). 3 stretches are compositionally biased toward acidic residues: residues 12–23, 31–48, and 83–95; these read DEDELDDLDEDM, IEQE…EYDL, and SDSD…DAGD. Over residues 114–123 the composition is skewed to polar residues; it reads PSGSNRQSEA. 6 WD repeats span residues 155–194, 199–238, 242–280, 283–322, 325–364, and 409–448; these read KLED…NKLL, VHSK…LKKL, AHDD…AIFE, ELED…MYVQ, PYEE…YHCD, and QHNM…DFGD.

It belongs to the WD repeat WDR55 family.

This chain is WD repeat-containing protein 55 homolog, found in Drosophila erecta (Fruit fly).